A 35-amino-acid chain; its full sequence is Cupiennin-1c (35 aa).

Position 35 is a glutamic acid 1-amide (Glu35).

Expressed by the venom gland.

The protein resides in the secreted. Functionally, has antimicrobial activity against E.coli, E.faecalis, P.aeruginosa, and S.aureus. The polypeptide is Cupiennin-1c (Cupiennius salei (American wandering spider)).